Reading from the N-terminus, the 595-residue chain is P2X purinoceptor 7 (595 aa).

Over Met-1–Gln-22 the chain is Cytoplasmic. Cys-4 carries S-palmitoyl cysteine lipidation. A helical membrane pass occupies residues Ser-23–Val-46. At Ser-47–Phe-328 the chain is on the extracellular side. Intrachain disulfides connect Cys-119-Cys-168, Cys-129-Cys-152, and Cys-135-Cys-162. 2 positions are modified to ADP-ribosylarginine: Arg-125 and Arg-133. Asn-187 carries an N-linked (GlcNAc...) asparagine glycan. Thr-189 is a binding site for ATP. 2 N-linked (GlcNAc...) asparagine glycosylation sites follow: Asn-202 and Asn-213. Cys-216 and Cys-226 are disulfide-bonded. Asn-241 is a glycosylation site (N-linked (GlcNAc...) asparagine). A disulfide bond links Cys-260 and Cys-269. N-linked (GlcNAc...) asparagine glycosylation is present at Asn-284. Residues Arg-294 and Lys-311 each coordinate ATP. A helical transmembrane segment spans residues Asp-329–Phe-353. Residue Ser-342 coordinates Na(+). Tyr-343 carries the post-translational modification Phosphotyrosine. The Cytoplasmic portion of the chain corresponds to Leu-354–Tyr-595. The C-cys anchor stretch occupies residues Ser-360–Cys-377. 4 S-palmitoyl cysteine lipidation sites follow: Cys-362, Cys-363, Cys-374, and Cys-377. Phosphoserine is present on Ser-390. The interval Lys-395–Tyr-595 is cytoplasmic ballast. 3 residues coordinate Zn(2+): Cys-479, Cys-499, and Cys-506. The GTP site is built by Arg-546, His-547, Tyr-550, and Ala-567. Position 572 (Cys-572) interacts with Zn(2+). GTP contacts are provided by Lys-583, Ser-589, and Gly-590.

It belongs to the P2X receptor family. As to quaternary structure, homotrimers. Interacts with LAMA3, ITGB2, ACTB, ACTN4, SVIL, MPP3, HSPA1, HSPCB, HSPA8, PIK230 and PTPRB. Interacts (via C-terminus) with EMP2. Interacts with isoform B; this interaction potentiates P2RX7 responses. Phosphorylation results in its inactivation. In terms of processing, ADP-ribosylation at Arg-125 is necessary and sufficient to activate P2RX7 and gate the channel. Post-translationally, palmitoylation of several cysteines in the C-terminal cytoplasmic tail is required for efficient localization to cell surface. Palmitoylation prevents channel desensitization by physically anchoring the palmitoylated groups to the membrane. Widely expressed with highest levels in brain and immune tissues. As to expression, predominant form in many tissues.

Its subcellular location is the cell membrane. It catalyses the reaction Ca(2+)(in) = Ca(2+)(out). It carries out the reaction K(+)(in) = K(+)(out). The enzyme catalyses Na(+)(in) = Na(+)(out). With respect to regulation, activated by high extracellular ATP levels (0.1-2.5 mM). The synthetic analog 2'(3')-O-(4-benzoylbenzoyl)ATP (BzATP) acts as a potent agonist. Does not undergo desensitization, instead, undergoes a facilitation process where currents progressively increase with repetitive or prolonged agonist application. Palmitoylation prevents channel desensitization. The permeability of the P2RX7 channel is modulated by the amount of cholesterol in the plasma membrane. Its function is as follows. ATP-gated nonselective transmembrane cation channel that requires high millimolar concentrations of ATP for activation. Upon ATP binding, it rapidly opens to allow the influx of small cations Na(+) and Ca(2+), and the K(+) efflux. Also has the ability to form a large pore in the cell membrane, allowing the passage of large cationic molecules. In microglia, may mediate NADPH transport across the plasma membrane. In immune cells, P2RX7 acts as a molecular sensor in pathological inflammatory states by detecting and responding to high local concentrations of extracellar ATP. In microglial cells, P2RX7 activation leads to the release of pro-inflammatory cytokines, such as IL-1beta and IL-18, through the activation of the NLRP3 inflammasome and caspase-1. Cooperates with KCNK6 to activate NLRP3 inflammasome. Activates death pathways leading to apoptosis and autophagy. Activates death pathways leading to pyroptosis. Functionally, shows ion channel activity but no macropore function. In terms of biological role, non-functional channel. This is P2X purinoceptor 7 (P2RX7) from Homo sapiens (Human).